The primary structure comprises 581 residues: DNA primase (581 aa).

The segment at Cys40–Cys64 adopts a CHC2-type zinc-finger fold. The Toprim domain maps to Asn259–Pro341. 3 residues coordinate Mg(2+): Glu265, Asp309, and Asp311.

This sequence belongs to the DnaG primase family. Monomer. Interacts with DnaB. Zn(2+) is required as a cofactor. It depends on Mg(2+) as a cofactor.

It catalyses the reaction ssDNA + n NTP = ssDNA/pppN(pN)n-1 hybrid + (n-1) diphosphate.. Functionally, RNA polymerase that catalyzes the synthesis of short RNA molecules used as primers for DNA polymerase during DNA replication. This is DNA primase from Escherichia coli O6:H1 (strain CFT073 / ATCC 700928 / UPEC).